Consider the following 178-residue polypeptide: ATP-dependent protease subunit HslV (178 aa).

Threonine 7 is an active-site residue. Na(+) contacts are provided by glycine 162, cysteine 165, and threonine 168.

This sequence belongs to the peptidase T1B family. HslV subfamily. A double ring-shaped homohexamer of HslV is capped on each side by a ring-shaped HslU homohexamer. The assembly of the HslU/HslV complex is dependent on binding of ATP.

The protein localises to the cytoplasm. It carries out the reaction ATP-dependent cleavage of peptide bonds with broad specificity.. Its activity is regulated as follows. Allosterically activated by HslU binding. Functionally, protease subunit of a proteasome-like degradation complex believed to be a general protein degrading machinery. The chain is ATP-dependent protease subunit HslV from Sulfurihydrogenibium sp. (strain YO3AOP1).